Reading from the N-terminus, the 257-residue chain is MDLRAKPASTCSNYTLLLPRLVLEVSKNDKICVACNSPDFVNSNGNLNVKDLEAHAKARLHSSHFAGFVLCPIVASEDKVSTFDMYYHVIQERTVLYRPQNTVLTEMCCIISALENCVVPSASLLIQYLDRANQLFNRHPSRDSLFLLGGVKTLISTLMHWHGFQHPDVSQLPRGLQSYELYKDLESFDAECKDLMLSMFCKSFKLGDWNEENEQLEAFTFNLFYSPTILTKHFKSKIIISSIKEACLLKDCVLSLI.

The protein belongs to the herpesviridae cytoplasmic envelopment protein 1 family.

Its subcellular location is the virion. It localises to the virion tegument. It is found in the host cytoplasm. The protein resides in the host Golgi apparatus. Functionally, plays a critical role in cytoplasmic virus egress. Participates in the final step of tegumentation and envelope acquisition within the host cytoplasm. This is Cytoplasmic envelopment protein 1 (42) from Connochaetes taurinus (Blue wildebeest).